The following is a 147-amino-acid chain: Hemoglobin subunit beta-2 (147 aa).

Residues 3–147 (HWTAEEKAAI…LVDGLSQGYN (145 aa)) form the Globin domain. Positions 64 and 93 each coordinate heme b.

Belongs to the globin family. As to quaternary structure, heterotetramer of two alpha chains and two beta chains. Red blood cells.

Functionally, involved in oxygen transport from the lung to the various peripheral tissues. The polypeptide is Hemoglobin subunit beta-2 (hbb2) (Xenopus laevis (African clawed frog)).